Consider the following 185-residue polypeptide: Peptidyl-tRNA hydrolase (185 aa).

Residue Y14 participates in tRNA binding. H19 acts as the Proton acceptor in catalysis. TRNA contacts are provided by Y64, N66, and N112.

It belongs to the PTH family. As to quaternary structure, monomer.

Its subcellular location is the cytoplasm. The enzyme catalyses an N-acyl-L-alpha-aminoacyl-tRNA + H2O = an N-acyl-L-amino acid + a tRNA + H(+). Functionally, hydrolyzes ribosome-free peptidyl-tRNAs (with 1 or more amino acids incorporated), which drop off the ribosome during protein synthesis, or as a result of ribosome stalling. In terms of biological role, catalyzes the release of premature peptidyl moieties from peptidyl-tRNA molecules trapped in stalled 50S ribosomal subunits, and thus maintains levels of free tRNAs and 50S ribosomes. The sequence is that of Peptidyl-tRNA hydrolase from Shouchella clausii (strain KSM-K16) (Alkalihalobacillus clausii).